The sequence spans 99 residues: Accessory protein p12I (99 aa).

Positions 4–11 (RLLSPLSP) match the SH3-binding motif. Residues 12-32 (LALTALLLFLLSPGEVSGLLL) traverse the membrane as a helical segment. An SH3-binding motif is present at residues 33-38 (RPLPAP). Residues 48–68 (ILSNLLFLLFLPLFFSLPLLL) form a helical membrane-spanning segment. 2 consecutive short sequence motifs (SH3-binding) follow at residues 70–77 (PSLPITMR) and 88–93 (RAPSQP).

Belongs to the HTLV-1 accessory protein p12I family. P12I is a homodimer. Interacts with human CANX, CALR, ATP6V0C, IL2RB, IL2RG. Binds to MHC-I heavy chains HLA-A2, HLA-B7 and HLA-Cw4. In terms of processing, ubiquitinated; a fraction of P12I is degraded via the ubiquitin system.

The protein localises to the host endoplasmic reticulum membrane. It localises to the host Golgi apparatus. It is found in the host cis-Golgi network membrane. Functionally, p12I is a modulator of T-lymphocyte proliferation and immune function and may contribute to establish a persistent infection. Binds and down-modulates cell surface expression of interleukin-2 receptors IL2RB and IL2RG. Also down-modulates cell surface MHC-I molecules by binding to free immature MHC-I heavy chains in the ER and targeting them to the proteasome for degradation. Binding to IL2RB mediates recruitment of JAK1 and JAK3. As a result of this interaction, p12I increases DNA-binding and transcriptional activity of STAT5. This Homo sapiens (Human) protein is Accessory protein p12I.